The chain runs to 211 residues: tRNA (guanine-N(7)-)-methyltransferase (211 aa).

S-adenosyl-L-methionine-binding residues include Glu-43, Glu-68, Asn-95, and Asp-117. Residue Asp-117 is part of the active site. Residues Lys-121, Asp-153, and 190 to 193 (TEYE) contribute to the substrate site.

Belongs to the class I-like SAM-binding methyltransferase superfamily. TrmB family.

It catalyses the reaction guanosine(46) in tRNA + S-adenosyl-L-methionine = N(7)-methylguanosine(46) in tRNA + S-adenosyl-L-homocysteine. The protein operates within tRNA modification; N(7)-methylguanine-tRNA biosynthesis. Its function is as follows. Catalyzes the formation of N(7)-methylguanine at position 46 (m7G46) in tRNA. This Alkaliphilus oremlandii (strain OhILAs) (Clostridium oremlandii (strain OhILAs)) protein is tRNA (guanine-N(7)-)-methyltransferase.